Reading from the N-terminus, the 493-residue chain is Hexokinase (493 aa).

The Hexokinase domain occupies 27–481 (EELSWRINKF…SGKGAAITAA (455 aa)). Residues 91–239 (TGQEKGTYYA…AIPAKVCCVL (149 aa)) form a hexokinase small subdomain region. Residue 102–107 (DFGGTN) coordinates ATP. The interval 177 to 203 (SVGFTFSFPCTSPSINCSILIDWTKGF) is glucose-binding. The hexokinase large subdomain stretch occupies residues 240-470 (NDAVGTLMSC…ENLIIIPADD (231 aa)).

The protein belongs to the hexokinase family.

The catalysed reaction is a D-hexose + ATP = a D-hexose 6-phosphate + ADP + H(+). It carries out the reaction D-mannose + ATP = D-mannose 6-phosphate + ADP + H(+). The enzyme catalyses D-fructose + ATP = D-fructose 6-phosphate + ADP + H(+). It catalyses the reaction D-glucose + ATP = D-glucose 6-phosphate + ADP + H(+). Its pathway is carbohydrate metabolism; hexose metabolism. The protein operates within carbohydrate degradation; glycolysis; D-glyceraldehyde 3-phosphate and glycerone phosphate from D-glucose: step 1/4. Its function is as follows. Catalyzes the phosphorylation of various hexoses to hexose 6-phosphate. This chain is Hexokinase (HK), found in Plasmodium falciparum.